Here is a 217-residue protein sequence, read N- to C-terminus: Small ribosomal subunit protein uS3 (217 aa).

The KH type-2 domain occupies 38–106; that stretch reads IRKFIDNELK…KVHINVIEIK (69 aa).

The protein belongs to the universal ribosomal protein uS3 family. Part of the 30S ribosomal subunit. Forms a tight complex with proteins S10 and S14.

Its function is as follows. Binds the lower part of the 30S subunit head. Binds mRNA in the 70S ribosome, positioning it for translation. This chain is Small ribosomal subunit protein uS3, found in Staphylococcus aureus (strain MSSA476).